The primary structure comprises 77 residues: Large ribosomal subunit protein bL28 (77 aa).

The protein belongs to the bacterial ribosomal protein bL28 family.

The sequence is that of Large ribosomal subunit protein bL28 from Polynucleobacter asymbioticus (strain DSM 18221 / CIP 109841 / QLW-P1DMWA-1) (Polynucleobacter necessarius subsp. asymbioticus).